A 219-amino-acid polypeptide reads, in one-letter code: RPA-interacting protein (219 aa).

Serine 18 is subject to Phosphoserine. Residues 137-212 (CPVCIKYNLR…PSLLMNCLTC (76 aa)) form an RIP-type zinc finger. The mediates nuclear export stretch occupies residues 164–180 (STDLTEQKLRACLEENV).

Interacts with the RPA1 subunit of RPA complex. Sumoylated; required for localization in the nuclear PML body and transport of RPA complex in PML body. Upon UV irradiation and during S phase, it is desumoylated, releasing RPA complex that is translocated to sites of DNA damage. Sumoylation takes place at different Lys residues.

The protein localises to the nucleus. Mediates the import of RPA complex into the nucleus, possibly via some interaction with importin beta. Sumoylation mediates the localization of RPA complex into the PML body of the nucleus, thereby participating in RPA function in DNA metabolism. This is RPA-interacting protein (Rpain) from Mus musculus (Mouse).